The sequence spans 506 residues: MNVFFTFSLLFLAALGSCADDRNPLEECFRETDYEEFLEIAKNGLSTTSNPKRVVIVGAGMSGLSAAYVLANAGHQVTVLEASERAGGRVKTYRNEKEGWYANLGPMRLPEKHRIVREYIRKFDLQLNEFSQENENAWYFIKNIRKRVGEVNKDPGVLEYPVKPSEVGKSAGQLYEESLQKAVEELRRTNCSYMLNKYDTYSTKEYLLKEGNLSPGAVDMIGDLLNEDSGYYVSFIESLKHDDIFAYEKRFDEIVGGMDKLPTSMYQAIQEKVHLNARVIKIQQDVKEVTVTYQTSEKETLSVTADYVIVCTTSRAARRIKFEPPLPPKKAHALRSVHYRSGTKIFLTCTKKFWEDDGIHGGKSTTDLPSRFIYYPNHNFPNGVGVIIAYGIGDDANYFQALDFEDCGDIVINDLSLIHQLPKEEIQAICRPSMIQRWSLDKYAMGGITTFTPYQFQHFSEALTAPVDRIYFAGEYTAQAHGWIDSTIKSGLRAARDVNRASEIKK.

The first 18 residues, 1–18, serve as a signal peptide directing secretion; sequence MNVFFTFSLLFLAALGSC. Residues Cys28 and Cys191 are joined by a disulfide bond. Glu36 serves as a coordination point for Zn(2+). Residues 61-62, Ser62, 81-82, Arg89, and 105-108 contribute to the FAD site; these read MS, EA, and GPMR. Arg108 contacts substrate. Zn(2+) contacts are provided by Glu111, Glu118, and Glu150. N-linked (GlcNAc...) asparagine glycosylation occurs at Asn190. Position 219 (Asp219) interacts with Zn(2+). His241 provides a ligand contact to substrate. Residue Glu248 participates in Zn(2+) binding. Val279 lines the FAD pocket. The Zn(2+) site is built by Glu299 and His332. A disulfide bridge links Cys349 with Cys430. Substrate is bound at residue Tyr390. His458 contacts Zn(2+). FAD is bound by residues Glu475 and 482 to 487; that span reads GWIDST. Residue 482-483 participates in substrate binding; it reads GW.

Belongs to the flavin monoamine oxidase family. FIG1 subfamily. As to quaternary structure, homodimer; non-covalently linked. Stabilized by a single zinc-binding site located at the dimer interface (Asp-219, His-332 and His-458). Other zinc-bind sites can be understood as transient and non-specific, and appear due to the high concentration of zinc ions used in the crystallization experiments. FAD is required as a cofactor. Expressed by the venom gland.

It is found in the secreted. The enzyme catalyses an L-alpha-amino acid + O2 + H2O = a 2-oxocarboxylate + H2O2 + NH4(+). It catalyses the reaction L-leucine + O2 + H2O = 4-methyl-2-oxopentanoate + H2O2 + NH4(+). It carries out the reaction L-phenylalanine + O2 + H2O = 3-phenylpyruvate + H2O2 + NH4(+). The catalysed reaction is L-tryptophan + O2 + H2O = indole-3-pyruvate + H2O2 + NH4(+). The enzyme catalyses L-methionine + O2 + H2O = 4-methylsulfanyl-2-oxobutanoate + H2O2 + NH4(+). It catalyses the reaction L-isoleucine + O2 + H2O = (S)-3-methyl-2-oxopentanoate + H2O2 + NH4(+). It carries out the reaction L-tyrosine + O2 + H2O = 3-(4-hydroxyphenyl)pyruvate + H2O2 + NH4(+). Catalyzes an oxidative deamination of predominantly hydrophobic and aromatic L-amino acids, thus producing hydrogen peroxide that may contribute to the diverse toxic effects of this enzyme. Shows high catalytic activity against L-Met, L-Leu, L-Phe, L-Trp, L-Tyr, L-Ile. Shows no or weak activity on L-Cys, L-Val, L-Gln, L-Thr, L-Ser, L-Lys, L-Arg, L-Asn, L-Glu, L-Gly, L-Pro, L-Asp and L-His. Induces platelet aggregation in platelet-rich plasma, probably due to hydrogen peroxide production, since catalase inhibits aggregation effect. Induces moderate mouse paw edema. Induces apoptosis and shows cytotoxicity against several cancer cell lines, which is inhibited by catalase. Shows hemolytic activity and antibacterial activities against both Gram-positive and Gram-negative bacteria. Has parasiticidal activities against both trypanosomes and leishmania, as a result of enzyme-catalyzed hydrogen peroxide production. Unlike other snake venom L-amino acid oxidases, does not induce hemorrhage (with 50 ug of enzyme). The chain is L-amino-acid oxidase from Bothrops atrox (Barba amarilla).